Reading from the N-terminus, the 1093-residue chain is Receptor-mediated endocytosis protein 6 (1093 aa).

The 234-residue stretch at 156–389 (LKIAQVVCNL…EMMDALLVEK (234 aa)) folds into the Ras-GAP domain. Disordered stretches follow at residues 547–610 (DLEK…GGEQ) and 643–669 (RSGSFVKPPPSGIPTSSSEQNLPDVAT). 2 stretches are compositionally biased toward polar residues: residues 568–577 (IDFSSGSAET) and 584–598 (DSTSVSPEPLTSTEE). One can recognise a VPS9 domain in the interval 955 to 1093 (HHRDKLLRGT…SAVEYIKTIL (139 aa)).

This sequence belongs to the GAPVD1 family. Interacts with GDP-bound rab-5. Interacts with alpha-adaptin.

It is found in the membrane. The protein resides in the cytoplasmic vesicle. Its subcellular location is the clathrin-coated vesicle. In terms of biological role, acts both as a GTPase-activating protein (GAP) and a guanine nucleotide exchange factor (GEF), and participates in endocytosis. Acts by regulating the activation of rab-5 by exchanging bound GDP for free GTP at clathrin coated pits. The polypeptide is Receptor-mediated endocytosis protein 6 (rme-6) (Caenorhabditis elegans).